The following is a 509-amino-acid chain: MEELQGYLKIDRSRERDFLYPLLFQEYIYALAHDHGLNKSILYEPMENLGYDKKYSLIIVKRLITRMYQQKHLIIFTNDSNPNFFFGHNKNLDSQMISEGVAVIVELPFSLRLVSSPESKEIDKSMTTLRSIHSIFPFLEDKLLHLNHVLDILIPYPIHLELLVQTLRSWIQDAPFLHLLRFFLYKYHNWNSLITQKTKMILFFSKENQRFFLFLYNFHVYESESIFVFLRKQSYHLRSTSSRAFLDRTHFYRKIEHFLVDFRNDFHTILWLFKDPFIQYFRFQGKSILSSKGTPLLMKKWKYYLVNLWECHFYFWSQPDRIHINQLSNHFIDFLGYLSSVRPTPSAVRSQMLEKSFIIDIVIKKFDTIVPIIPMIGSLAKAKFCNFSGHPISKPAWADSSDSDIIDRFGRICRNLSHYYSGSSKKKSLYRIKYILRLSCARTLARKHKSTVRSFLKRLGSEFLEEFLMEEEQVLSFILPRISYFSKRLYKERIWYFDIIRINDLTNLS.

The protein belongs to the intron maturase 2 family. MatK subfamily.

It localises to the plastid. Its subcellular location is the chloroplast. Functionally, usually encoded in the trnK tRNA gene intron. Probably assists in splicing its own and other chloroplast group II introns. The sequence is that of Maturase K from Clematis ligusticifolia (Western white clematis).